A 622-amino-acid chain; its full sequence is Low affinity potassium transport system protein Kup (622 aa).

The next 12 membrane-spanning stretches (helical) occupy residues 9-29 (LPAI…TSPL), 49-69 (VFGF…IKYL), 103-123 (VIMG…TPAI), 137-157 (PQLD…LFMI), 165-185 (VGKL…VLGL), 213-233 (VSFI…ALYA), 247-267 (WFTV…ALLL), 276-296 (PFFL…AALA), 337-357 (IYIP…IVSF), 363-383 (LAAA…ILST), 396-416 (LVAL…SANL), and 419-439 (LLSG…IMTT).

Belongs to the HAK/KUP transporter (TC 2.A.72) family.

The protein localises to the cell inner membrane. It catalyses the reaction K(+)(in) + H(+)(in) = K(+)(out) + H(+)(out). Its function is as follows. Responsible for the low-affinity transport of potassium into the cell. Likely operates as a K(+):H(+) symporter. In Salmonella arizonae (strain ATCC BAA-731 / CDC346-86 / RSK2980), this protein is Low affinity potassium transport system protein Kup.